The sequence spans 132 residues: Agouti-signaling protein (132 aa).

An N-terminal signal peptide occupies residues 1–22; it reads MDVTRLLLATLLVFLCFFTAYS. Asparagine 39 is a glycosylation site (N-linked (GlcNAc...) asparagine). Residues 57–88 form a disordered region; sequence KKSKQTSRKEAEKKRSSKKEASMKKVARPRTP. Residues 63 to 79 show a composition bias toward basic and acidic residues; the sequence is SRKEAEKKRSSKKEASM. Disulfide bonds link cysteine 93-cysteine 108, cysteine 100-cysteine 114, cysteine 107-cysteine 125, cysteine 111-cysteine 132, and cysteine 116-cysteine 123. An Agouti domain is found at 93-132; the sequence is CVATRDSCKPPAPACCDPCASCQCRFFRSACSCRVLSLNC.

It is found in the secreted. Involved in the regulation of melanogenesis. The binding of ASP to MC1R precludes alpha-MSH initiated signaling and thus blocks production of cAMP, leading to a down-regulation of eumelanogenesis (brown/black pigment) and thus increasing synthesis of pheomelanin (yellow/red pigment). The protein is Agouti-signaling protein (ASIP) of Macaca assamensis (Assam macaque).